We begin with the raw amino-acid sequence, 385 residues long: Glucans biosynthesis protein C (385 aa).

Transmembrane regions (helical) follow at residues 17–37 (AWLM…SHTW), 60–80 (MQVF…RYPL), 91–111 (VGIP…IMLQ), 137–157 (ISHL…VWIF), 173–193 (KFSM…YAVI), 212–232 (FIVM…LAFI), 239–259 (LFTT…VAYL), 274–294 (TESV…FSFG), 311–331 (ASLF…AYIT), and 338–358 (WLGF…LYEI).

This sequence belongs to the acyltransferase 3 family. OpgC subfamily.

Its subcellular location is the cell membrane. It participates in glycan metabolism; osmoregulated periplasmic glucan (OPG) biosynthesis. In terms of biological role, necessary for the succinyl substitution of periplasmic glucans. Could catalyze the transfer of succinyl residues from the cytoplasmic side of the membrane to the nascent glucan backbones on the periplasmic side of the membrane. This chain is Glucans biosynthesis protein C, found in Escherichia coli (strain SMS-3-5 / SECEC).